The primary structure comprises 407 residues: Arylacetamide deacetylase-like 3 (407 aa).

Residues 119–121 (HGG) carry the Involved in the stabilization of the negatively charged intermediate by the formation of the oxyanion hole motif. Residues serine 193, aspartate 347, and histidine 377 contribute to the active site.

The protein belongs to the 'GDXG' lipolytic enzyme family.

In Homo sapiens (Human), this protein is Arylacetamide deacetylase-like 3 (AADACL3).